The primary structure comprises 196 residues: Dual-action ribosomal maturation protein DarP (196 aa).

Belongs to the DarP family.

Its subcellular location is the cytoplasm. Its function is as follows. Member of a network of 50S ribosomal subunit biogenesis factors which assembles along the 30S-50S interface, preventing incorrect 23S rRNA structures from forming. Promotes peptidyl transferase center (PTC) maturation. The chain is Dual-action ribosomal maturation protein DarP from Stenotrophomonas maltophilia (strain R551-3).